We begin with the raw amino-acid sequence, 215 residues long: Large ribosomal subunit protein uL4 (215 aa).

A disordered region spans residues 46-72 (TAKSKNRAEVSGGGRKPWAQKGGGRAR). Over residues 56–71 (SGGGRKPWAQKGGGRA) the composition is skewed to gly residues.

Belongs to the universal ribosomal protein uL4 family. As to quaternary structure, part of the 50S ribosomal subunit.

One of the primary rRNA binding proteins, this protein initially binds near the 5'-end of the 23S rRNA. It is important during the early stages of 50S assembly. It makes multiple contacts with different domains of the 23S rRNA in the assembled 50S subunit and ribosome. Its function is as follows. Forms part of the polypeptide exit tunnel. The sequence is that of Large ribosomal subunit protein uL4 from Helicobacter pylori (strain ATCC 700392 / 26695) (Campylobacter pylori).